Reading from the N-terminus, the 419-residue chain is Metacaspase-1B (419 aa).

Residues 1-109 (MYHPNYNYPP…PPMEAQQFGK (109 aa)) form a disordered region. Residues 33–50 (SPPPPQPYYSNGYPPPSQ) are compositionally biased toward pro residues. The segment covering 51–66 (SPHSYSPPQYPPHGQY) has biased composition (low complexity). The span at 82–93 (QYRSYHSHSPSW) shows a compositional bias: polar residues. Residues His-210 and Cys-266 contribute to the active site.

The protein belongs to the peptidase C14B family.

In terms of biological role, involved in cell death (apoptosis). The chain is Metacaspase-1B (casB) from Aspergillus oryzae (strain ATCC 42149 / RIB 40) (Yellow koji mold).